We begin with the raw amino-acid sequence, 339 residues long: Lipoate-protein ligase A (339 aa).

The region spanning 28–211 (NPDSHTLFLW…AFREYYRDTD (184 aa)) is the BPL/LPL catalytic domain. ATP contacts are provided by residues arginine 70, 75–78 (GAVF), and lysine 129. Lysine 129 is a (R)-lipoate binding site.

It belongs to the LplA family. In terms of assembly, monomer.

The protein localises to the cytoplasm. It catalyses the reaction L-lysyl-[lipoyl-carrier protein] + (R)-lipoate + ATP = N(6)-[(R)-lipoyl]-L-lysyl-[lipoyl-carrier protein] + AMP + diphosphate + H(+). It functions in the pathway protein modification; protein lipoylation via exogenous pathway; protein N(6)-(lipoyl)lysine from lipoate: step 1/2. It participates in protein modification; protein lipoylation via exogenous pathway; protein N(6)-(lipoyl)lysine from lipoate: step 2/2. Functionally, catalyzes both the ATP-dependent activation of exogenously supplied lipoate to lipoyl-AMP and the transfer of the activated lipoyl onto the lipoyl domains of lipoate-dependent enzymes. The protein is Lipoate-protein ligase A of Psychrobacter cryohalolentis (strain ATCC BAA-1226 / DSM 17306 / VKM B-2378 / K5).